Here is a 135-residue protein sequence, read N- to C-terminus: ATP synthase epsilon chain (135 aa).

It belongs to the ATPase epsilon chain family. F-type ATPases have 2 components, CF(1) - the catalytic core - and CF(0) - the membrane proton channel. CF(1) has five subunits: alpha(3), beta(3), gamma(1), delta(1), epsilon(1). CF(0) has three main subunits: a, b and c.

The protein localises to the cell inner membrane. Functionally, produces ATP from ADP in the presence of a proton gradient across the membrane. The sequence is that of ATP synthase epsilon chain from Mesorhizobium japonicum (strain LMG 29417 / CECT 9101 / MAFF 303099) (Mesorhizobium loti (strain MAFF 303099)).